A 91-amino-acid chain; its full sequence is Alpha-defensin-related sequence 2 (91 aa).

A signal peptide spans 1 to 19 (MKKLVLLFALVLLAFQVQA). The propeptide occupies 20–58 (DSIQNTDEETKTEEQPGEKDQAVSVSFGDPQGSALQDAA). Residues 22 to 48 (IQNTDEETKTEEQPGEKDQAVSVSFGD) form a disordered region. Residues 27–40 (EETKTEEQPGEKDQ) show a composition bias toward basic and acidic residues. Repeat copies occupy residues 65 to 67 (CPQ), 68 to 70 (CPR), 71 to 73 (CPS), 74 to 76 (CPS), 77 to 79 (CPR), 80 to 82 (CPR), and 83 to 85 (CPR). A 7 X 3 AA tandem repeats of C-P-X region spans residues 65 to 85 (CPQCPRCPSCPSCPRCPRCPR).

This sequence belongs to the alpha-defensin family. Small bowel, spleen, colon, kidney, liver, stomach and femur marrow.

The protein resides in the secreted. Apparent precursor of a secreted, cationic, proline- and cysteine-rich peptide that contains Cys-Pro-Xaa repeats. Unlike cryptdin, the proposed mature peptide region lacks the structural motif characteristic of defensins. It may have microbicidal activities. The sequence is that of Alpha-defensin-related sequence 2 (Defa-rs2) from Mus musculus (Mouse).